Here is a 132-residue protein sequence, read N- to C-terminus: Acid shock protein (132 aa).

An N-terminal signal peptide occupies residues 1–21; the sequence is MKKVLALVVAAAMGLSSAAFA. The span at 20 to 45 shows a compositional bias: low complexity; it reads FAAETTTSSAAPATATATTTKAAPAK. Positions 20–132 are disordered; sequence FAAETTTSSA…AAKPAAQPAA (113 aa). The propeptide occupies 22 to 90; the sequence is AETTTSSAAP…TTAPVEQKAQ (69 aa). A compositionally biased stretch (basic residues) spans 62–71; sequence AAKKHHKKAV. Composition is skewed to low complexity over residues 76–90 and 100–109; these read AAPA…QKAQ and AKPAVAQKAQ. A compositionally biased stretch (basic residues) spans 110-119; it reads AAKKHHKKAV.

This sequence belongs to the Asr family. Proteolytic processing gives rise to the active protein.

It is found in the periplasm. Its function is as follows. Required for growth and/or survival at acidic conditions. The polypeptide is Acid shock protein (Enterobacter sp. (strain 638)).